A 33-amino-acid chain; its full sequence is Toxin BcV (33 aa).

A disulfide bridge connects residues Cys6 and Cys30.

The protein localises to the secreted. The protein resides in the nematocyst. Its function is as follows. Potently and reversibly blocks mammalian Kv11/KCNH/ERG voltage-gated potassium channels. Acts as a gating-modifier toxin that shifts the voltage-dependence of ERG activation in the positive direction and suppresses its current amplitudes elicited by strong depolarizing pulses that maximally activate the channels. This Bunodosoma caissarum (Sea anemone) protein is Toxin BcV.